The chain runs to 191 residues: LOB domain-containing protein 19 (191 aa).

Residues Gly15–Leu117 form the LOB domain.

It belongs to the LOB domain-containing protein family. As to expression, expressed in shoots, roots and floral tissues, but not in stems or leaves.

The sequence is that of LOB domain-containing protein 19 (LBD19) from Arabidopsis thaliana (Mouse-ear cress).